The following is a 980-amino-acid chain: Valine--tRNA ligase (980 aa).

A 'HIGH' region motif is present at residues 43 to 53 (PNVTGTLHMGH). A 'KMSKS' region motif is present at residues 586-590 (KMSKS). Residue Lys589 participates in ATP binding. The stretch at 914-978 (LVDMDAERTR…QLTGLREQRA (65 aa)) forms a coiled coil.

Belongs to the class-I aminoacyl-tRNA synthetase family. ValS type 1 subfamily. Monomer.

The protein localises to the cytoplasm. It catalyses the reaction tRNA(Val) + L-valine + ATP = L-valyl-tRNA(Val) + AMP + diphosphate. Functionally, catalyzes the attachment of valine to tRNA(Val). As ValRS can inadvertently accommodate and process structurally similar amino acids such as threonine, to avoid such errors, it has a 'posttransfer' editing activity that hydrolyzes mischarged Thr-tRNA(Val) in a tRNA-dependent manner. This is Valine--tRNA ligase from Xanthomonas euvesicatoria pv. vesicatoria (strain 85-10) (Xanthomonas campestris pv. vesicatoria).